The following is a 94-amino-acid chain: uncharacterized protein (94 aa).

An N-terminal signal peptide occupies residues 1–22 (MIMKNCLLLGALLMGFTGVAMA).

This is an uncharacterized protein from Escherichia coli (strain K12).